The primary structure comprises 323 residues: Aldo-keto reductase family 1 member C18 (323 aa).

Residues 20–24 (GFGTY) and D50 each bind NADP(+). Y55 acts as the Proton donor in catalysis. H117 lines the substrate pocket. NADP(+) contacts are provided by residues 166–167 (SN), Q190, 216–221 (YGALGT), and 270–280 (KSFNEERIREN).

Belongs to the aldo/keto reductase family. Monomer.

The protein localises to the cytoplasm. It catalyses the reaction (17R,20S)-17,20-dihydroxypregn-4-en-3-one + NADP(+) = 17alpha-hydroxyprogesterone + NADPH + H(+). The enzyme catalyses (17R,20S)-17,20-dihydroxypregn-4-en-3-one + NAD(+) = 17alpha-hydroxyprogesterone + NADH + H(+). In terms of biological role, catalyzes the conversion of progesterone into 20-alpha-dihydroprogesterone (20 alpha-OHP). In Mus musculus (Mouse), this protein is Aldo-keto reductase family 1 member C18 (Akr1c18).